A 347-amino-acid polypeptide reads, in one-letter code: Magnesium-protoporphyrin IX monomethyl ester [oxidative] cyclase (347 aa).

It belongs to the AcsF family. Fe cation is required as a cofactor.

It catalyses the reaction Mg-protoporphyrin IX 13-monomethyl ester + 3 NADPH + 3 O2 + 2 H(+) = 3,8-divinyl protochlorophyllide a + 3 NADP(+) + 5 H2O. The protein operates within porphyrin-containing compound metabolism; chlorophyll biosynthesis (light-independent). Catalyzes the formation of the isocyclic ring in chlorophyll biosynthesis. Mediates the cyclase reaction, which results in the formation of divinylprotochlorophyllide (Pchlide) characteristic of all chlorophylls from magnesium-protoporphyrin IX 13-monomethyl ester (MgPMME). The polypeptide is Magnesium-protoporphyrin IX monomethyl ester [oxidative] cyclase (Prochlorococcus marinus (strain SARG / CCMP1375 / SS120)).